We begin with the raw amino-acid sequence, 103 residues long: Carboxysome shell protein CcmK3 (103 aa).

The 88-residue stretch at 4–91 folds into the BMC domain; the sequence is AVGVIQTLGF…PPENVLAVLP (88 aa).

It belongs to the bacterial microcompartments protein family. CcmK subfamily. In terms of assembly, forms mixed heterohexamers with CcmK4, probably with 1:5 CcmK3:CcmK4 stoichiometry. Only very weak interactions with CcmK1 and CcmK2 were seen. Bulky residues in the pore region probably preclude the formation of homohexamers by this subunit.

Its subcellular location is the carboxysome. Functionally, a probably minor shell protein component of the carboxysome, a polyhedral inclusion where RuBisCO (ribulose bisphosphate carboxylase, rbcL-rbcS) is sequestered. This subunit probably does not form homohexamers. The sequence is that of Carboxysome shell protein CcmK3 from Synechocystis sp. (strain ATCC 27184 / PCC 6803 / Kazusa).